A 252-amino-acid chain; its full sequence is 3-dehydroquinate dehydratase (252 aa).

Residues Ser21, 46-48, and Arg82 each bind 3-dehydroquinate; that span reads EWR. His143 functions as the Proton donor/acceptor in the catalytic mechanism. Residue Lys170 is the Schiff-base intermediate with substrate of the active site. Residues Arg213, Ser232, and Gln236 each coordinate 3-dehydroquinate.

This sequence belongs to the type-I 3-dehydroquinase family. Homodimer.

The enzyme catalyses 3-dehydroquinate = 3-dehydroshikimate + H2O. It participates in metabolic intermediate biosynthesis; chorismate biosynthesis; chorismate from D-erythrose 4-phosphate and phosphoenolpyruvate: step 3/7. In terms of biological role, involved in the third step of the chorismate pathway, which leads to the biosynthesis of aromatic amino acids. Catalyzes the cis-dehydration of 3-dehydroquinate (DHQ) and introduces the first double bond of the aromatic ring to yield 3-dehydroshikimate. The polypeptide is 3-dehydroquinate dehydratase (Escherichia coli O17:K52:H18 (strain UMN026 / ExPEC)).